Consider the following 625-residue polypeptide: MPKILDEINQPNDIKKISAKKYTQLAAEIRRFLIANVSKTGGHLASNLGVVELTMALHLFLDFPEDKLVWDVGHQAYVHKLLTGRKNDFKTLRQYEGMSGFPKRKESDCDAFDTGHSSTSLSVAVGLVKARELSEEQRKVVAVIGDGALSGGMAFEALNNAGRLKENMIIVLNDNNMSISENVGGMSNYLGKARTNYRYMDFKGGLETALKKIPKVGDAIVTTLKQSKDSLKHLFIPGMLFEDMGMTYIGPIDGHNINQMLTALKSASRVNGAVLIHTVTKKGKGYEPAEKEPSKYHGVEPFDIKTGKKLKINSEVSYTEVFGKKLIELAKVRNDVVAITAAMPDGTGLTAFGDVFPNRFFDVGIAEEHAVTFAAGLAAAGFKPVVAVYSTFLQRAYDQILHDVCVGKLPVVFALDRAGIVGNDGETHQGMFDLSYLSHMPGLTVIAPKNSWEFERMLEYCIDFDGPIAIRYPKNTAYLGLEDHKKEIIYGKGELIASEEEIALIAIGSMVETAVLVREHLHKLGLKATLVNARFISPLDEEMLHQLTKSHTLFVTMEENVKRGGFGEEVSVFLCEHDYQGIKHLNISIPNMFVEHGDRTLLKEKLGLDAESIVDKICRQRGMQK.

Thiamine diphosphate contacts are provided by residues H74 and 115–117 (GHS). Residue D146 coordinates Mg(2+). Thiamine diphosphate-binding positions include 147–148 (GA), N175, Y286, and E367. N175 is a Mg(2+) binding site.

Belongs to the transketolase family. DXPS subfamily. In terms of assembly, homodimer. Requires Mg(2+) as cofactor. The cofactor is thiamine diphosphate.

It catalyses the reaction D-glyceraldehyde 3-phosphate + pyruvate + H(+) = 1-deoxy-D-xylulose 5-phosphate + CO2. Its pathway is metabolic intermediate biosynthesis; 1-deoxy-D-xylulose 5-phosphate biosynthesis; 1-deoxy-D-xylulose 5-phosphate from D-glyceraldehyde 3-phosphate and pyruvate: step 1/1. Catalyzes the acyloin condensation reaction between C atoms 2 and 3 of pyruvate and glyceraldehyde 3-phosphate to yield 1-deoxy-D-xylulose-5-phosphate (DXP). The chain is 1-deoxy-D-xylulose-5-phosphate synthase from Lachnoclostridium phytofermentans (strain ATCC 700394 / DSM 18823 / ISDg) (Clostridium phytofermentans).